The sequence spans 270 residues: UPF0354 protein BT9727_4425 (270 aa).

Belongs to the UPF0354 family.

This is UPF0354 protein BT9727_4425 from Bacillus thuringiensis subsp. konkukian (strain 97-27).